Reading from the N-terminus, the 164-residue chain is 6,7-dimethyl-8-ribityllumazine synthase (164 aa).

Residues Phe28, 62–64 (ALE), and 86–88 (AVI) each bind 5-amino-6-(D-ribitylamino)uracil. Position 91–92 (91–92 (ET)) interacts with (2S)-2-hydroxy-3-oxobutyl phosphate. The active-site Proton donor is the His94. Residue Asn119 coordinates 5-amino-6-(D-ribitylamino)uracil. Arg133 serves as a coordination point for (2S)-2-hydroxy-3-oxobutyl phosphate.

It belongs to the DMRL synthase family.

The enzyme catalyses (2S)-2-hydroxy-3-oxobutyl phosphate + 5-amino-6-(D-ribitylamino)uracil = 6,7-dimethyl-8-(1-D-ribityl)lumazine + phosphate + 2 H2O + H(+). It participates in cofactor biosynthesis; riboflavin biosynthesis; riboflavin from 2-hydroxy-3-oxobutyl phosphate and 5-amino-6-(D-ribitylamino)uracil: step 1/2. Functionally, catalyzes the formation of 6,7-dimethyl-8-ribityllumazine by condensation of 5-amino-6-(D-ribitylamino)uracil with 3,4-dihydroxy-2-butanone 4-phosphate. This is the penultimate step in the biosynthesis of riboflavin. The sequence is that of 6,7-dimethyl-8-ribityllumazine synthase from Nitrosomonas europaea (strain ATCC 19718 / CIP 103999 / KCTC 2705 / NBRC 14298).